The primary structure comprises 278 residues: Leucine-rich repeat-containing protein 10 (278 aa).

LRR repeat units lie at residues 30–51 (LDRMVDLSGSQLRRFPVHVCSF), 52–74 (QELVKLYLSDNRLNSLPPELGQL), 76–97 (NLQILALDFNNFKALPQVVCTL), 98–121 (KQLCILYLGNNKLCDLPRELSLLQ), 123–143 (LRTLWVEANYLTKLPEVVCEL), 144–166 (SLLKTLHAGSNALRLLPGQLQRL), 167–189 (RELRTIWLSGNLLTDFPPVLLHM), and 191–213 (FLEIIDVDRNSIRYFPSLAHLSS). A compositionally biased stretch (basic and acidic residues) spans 239–250 (RWAEETPEPDPR). The disordered stretch occupies residues 239-278 (RWAEETPEPDPRKARRYALAREESQEAQLPALPPLPPTNS). Residues 269–278 (ALPPLPPTNS) are compositionally biased toward pro residues.

It is found in the nucleus. Its function is as follows. May play important roles in cardiac development and/or cardiac function. The chain is Leucine-rich repeat-containing protein 10 (LRRC10) from Bos taurus (Bovine).